We begin with the raw amino-acid sequence, 857 residues long: Protein ARG5,6, mitochondrial (857 aa).

Positions isoleucine 341–leucine 492 constitute an N-acetyltransferase domain. The tract at residues glycine 509–glutamate 532 is disordered. The active site involves cysteine 669.

The protein in the N-terminal section; belongs to the acetylglutamate kinase family. It in the C-terminal section; belongs to the NAGSA dehydrogenase family.

It is found in the mitochondrion. It catalyses the reaction N-acetyl-L-glutamate 5-semialdehyde + phosphate + NADP(+) = N-acetyl-L-glutamyl 5-phosphate + NADPH + H(+). It carries out the reaction N-acetyl-L-glutamate + ATP = N-acetyl-L-glutamyl 5-phosphate + ADP. Its pathway is amino-acid biosynthesis; L-arginine biosynthesis; N(2)-acetyl-L-ornithine from L-glutamate: step 2/4. The protein operates within amino-acid biosynthesis; L-arginine biosynthesis; N(2)-acetyl-L-ornithine from L-glutamate: step 3/4. In Candida albicans (Yeast), this protein is Protein ARG5,6, mitochondrial (ARG5,6).